The following is a 211-amino-acid chain: Outer-membrane lipoprotein carrier protein (211 aa).

Residues 1–24 (MNTIKILIGLLGIFLFSLSGIVSA) form the signal peptide.

This sequence belongs to the LolA family. In terms of assembly, monomer.

It is found in the periplasm. Functionally, participates in the translocation of lipoproteins from the inner membrane to the outer membrane. Only forms a complex with a lipoprotein if the residue after the N-terminal Cys is not an aspartate (The Asp acts as a targeting signal to indicate that the lipoprotein should stay in the inner membrane). In Coxiella burnetii (strain RSA 331 / Henzerling II), this protein is Outer-membrane lipoprotein carrier protein.